Reading from the N-terminus, the 52-residue chain is Alpha-crystallin B chain (52 aa).

It belongs to the small heat shock protein (HSP20) family. In terms of assembly, homodimer. Aggregates with homologous proteins, including alpha-A-crystallin and the small heat shock protein HSPB1, to form large heteromeric complexes.

May contribute to the transparency and refractive index of the lens. This chain is Alpha-crystallin B chain (CRYAB), found in Eudromia elegans (Elegant crested-tinamou).